The following is a 221-amino-acid chain: 7-cyano-7-deazaguanine synthase (221 aa).

Leucine 8–isoleucine 18 serves as a coordination point for ATP. Cysteine 186, cysteine 196, cysteine 199, and cysteine 202 together coordinate Zn(2+).

Belongs to the QueC family. Zn(2+) serves as cofactor.

It carries out the reaction 7-carboxy-7-deazaguanine + NH4(+) + ATP = 7-cyano-7-deazaguanine + ADP + phosphate + H2O + H(+). Its pathway is purine metabolism; 7-cyano-7-deazaguanine biosynthesis. Functionally, catalyzes the ATP-dependent conversion of 7-carboxy-7-deazaguanine (CDG) to 7-cyano-7-deazaguanine (preQ(0)). This Stenotrophomonas maltophilia (strain K279a) protein is 7-cyano-7-deazaguanine synthase.